The sequence spans 244 residues: Large ribosomal subunit protein uL30 (244 aa).

It belongs to the universal ribosomal protein uL30 family.

This is Large ribosomal subunit protein uL30 (RPL7) from Candida glabrata (strain ATCC 2001 / BCRC 20586 / JCM 3761 / NBRC 0622 / NRRL Y-65 / CBS 138) (Yeast).